A 212-amino-acid chain; its full sequence is Imidazole glycerol phosphate synthase subunit HisH (212 aa).

In terms of domain architecture, Glutamine amidotransferase type-1 spans 3 to 211; the sequence is LIAVIDYDMG…VQQVQKLALV (209 aa). The active-site Nucleophile is C81. Active-site residues include H186 and E188.

As to quaternary structure, heterodimer of HisH and HisF.

Its subcellular location is the cytoplasm. The catalysed reaction is 5-[(5-phospho-1-deoxy-D-ribulos-1-ylimino)methylamino]-1-(5-phospho-beta-D-ribosyl)imidazole-4-carboxamide + L-glutamine = D-erythro-1-(imidazol-4-yl)glycerol 3-phosphate + 5-amino-1-(5-phospho-beta-D-ribosyl)imidazole-4-carboxamide + L-glutamate + H(+). It carries out the reaction L-glutamine + H2O = L-glutamate + NH4(+). Its pathway is amino-acid biosynthesis; L-histidine biosynthesis; L-histidine from 5-phospho-alpha-D-ribose 1-diphosphate: step 5/9. Its function is as follows. IGPS catalyzes the conversion of PRFAR and glutamine to IGP, AICAR and glutamate. The HisH subunit catalyzes the hydrolysis of glutamine to glutamate and ammonia as part of the synthesis of IGP and AICAR. The resulting ammonia molecule is channeled to the active site of HisF. The sequence is that of Imidazole glycerol phosphate synthase subunit HisH from Microcystis aeruginosa (strain NIES-843 / IAM M-2473).